Here is a 997-residue protein sequence, read N- to C-terminus: Kinesin-like protein KIF19 (997 aa).

One can recognise a Kinesin motor domain in the interval 11 to 346; the sequence is QLMVALRVRP…LTYAGRAKNI (336 aa). 104-111 provides a ligand contact to ATP; the sequence is GPTGCGKT. Residues 361-388 adopt a coiled-coil conformation; sequence IAQYTSIIADLRGEIQRLKCKIDQQAGR. Positions 477–494 are enriched in basic and acidic residues; that stretch reads EERRKESYTKEDSEKDSD. Disordered regions lie at residues 477–509, 665–704, 718–759, and 784–997; these read EERR…EVAS, KITP…GTDS, QVKS…SSEN, and AAQR…LQHN. Residues 506–551 adopt a coiled-coil conformation; the sequence is EVASARENIAALVGEQKKLRKEKLALEQRCRELRARGRRLEETLPR. Residues 683 to 697 show a composition bias toward polar residues; that stretch reads KTLSSEAQRPQNNTL. Residues 750–759 show a composition bias toward low complexity; that stretch reads INSSPESSEN. 2 stretches are compositionally biased toward polar residues: residues 835 to 851 and 950 to 959; these read TLQH…STGE and PNQNTGSGNP.

The protein belongs to the TRAFAC class myosin-kinesin ATPase superfamily. Kinesin family. As to expression, strongly expressed in the oviduct and trachea. Expressed in testis, lung, ovary and brain.

It localises to the cytoplasm. Its subcellular location is the cytoskeleton. It is found in the cell projection. The protein localises to the cilium. In terms of biological role, plus end-directed microtubule-dependent motor protein that regulates the length of motile cilia by mediating depolymerization of microtubules at ciliary tips. The protein is Kinesin-like protein KIF19 (Kif19) of Mus musculus (Mouse).